The chain runs to 1193 residues: Probable cation-transporting ATPase 13A4 (1193 aa).

Residues 1–32 lie on the Cytoplasmic side of the membrane; the sequence is MGDHLEKSQHALLNEGDENEMEIFGYRTQGCR. Residues 33–53 lie within the membrane without spanning it; that stretch reads KALCLIGSIFSLGMLPLVFYW. Over 54 to 198 the chain is Cytoplasmic; that stretch reads RPAWRVWANC…DVEITPIWKL (145 aa). Residues 199-219 form a helical membrane-spanning segment; sequence LIKEVLNPFYIFQLFSVCLWF. Topologically, residues 220-224 are lumenal; it reads SEDYK. A helical membrane pass occupies residues 225 to 245; it reads EYALAIILMSVISIALTVYDL. The Cytoplasmic portion of the chain corresponds to 246–401; that stretch reads RQQSVKLHHL…NFKLYRDAIR (156 aa). The chain crosses the membrane as a helical span at residues 402 to 422; it reads FLLCLVGTATIGMVYTLCVYV. The Lumenal portion of the chain corresponds to 423–437; sequence LSGEPPEEVVRKALD. The helical transmembrane segment at 438–458 threads the bilayer; sequence VITIAVPPALPAALTTGIIYA. The Cytoplasmic segment spans residues 459 to 901; that stretch reads QRRLKKKGIF…KEGRAALVTS (443 aa). Asp-487 acts as the 4-aspartylphosphate intermediate in catalysis. Positions 849 and 853 each coordinate Mg(2+). Residues 902-922 form a helical membrane-spanning segment; sequence FCMFKYMALYSMIQYVGVLLL. At 923 to 933 the chain is on the lumenal side; the sequence is YWKTNSLSNYQ. A helical transmembrane segment spans residues 934–954; the sequence is FLFQDLAITTLIGVTMNLNGA. The Cytoplasmic portion of the chain corresponds to 955–973; it reads NPKLVPFRPAGRLISPPLL. The chain crosses the membrane as a helical span at residues 974-994; sequence LSVVLNILLSLAMHIVGFILV. The Lumenal segment spans residues 995 to 1036; the sequence is QKQPWYIMDYHSVCPVRNESASALAASPSVPEKTRSNSTFAS. Residues 1037–1057 form a helical membrane-spanning segment; the sequence is FENTTIWFLGTINCIFVALVF. Residues 1058-1071 lie on the Cytoplasmic side of the membrane; that stretch reads SKGKPFRQPTYTNY. A helical membrane pass occupies residues 1072–1092; sequence IFVLVLILQMGVCLFILFADI. Residues 1093–1105 are Lumenal-facing; it reads PEMHRRLDLLCTP. Residues 1106–1126 traverse the membrane as a helical segment; sequence VLWRVYILIMISSNFVVSLAV. Residues 1127–1193 lie on the Cytoplasmic side of the membrane; that stretch reads EKAIIENRAL…PVFESNEEQL (67 aa).

This sequence belongs to the cation transport ATPase (P-type) (TC 3.A.3) family. Type V subfamily. In terms of tissue distribution, expressed in brain and stomach.

The protein resides in the early endosome membrane. The protein localises to the late endosome membrane. Its subcellular location is the recycling endosome membrane. It carries out the reaction ATP + H2O = ADP + phosphate + H(+). The polypeptide is Probable cation-transporting ATPase 13A4 (Atp13a4) (Mus musculus (Mouse)).